We begin with the raw amino-acid sequence, 347 residues long: GMP reductase (347 aa).

Residue 108–131 coordinates NADP(+); that stretch reads ADFEKTVQILALNPALNFVCIDVA. The K(+) site is built by G181 and G183. C186 acts as the Thioimidate intermediate in catalysis. 216–239 lines the NADP(+) pocket; sequence IVSDGGCTMPGDVAKAFGGGADFV.

This sequence belongs to the IMPDH/GMPR family. GuaC type 1 subfamily. Homotetramer.

The catalysed reaction is IMP + NH4(+) + NADP(+) = GMP + NADPH + 2 H(+). In terms of biological role, catalyzes the irreversible NADPH-dependent deamination of GMP to IMP. It functions in the conversion of nucleobase, nucleoside and nucleotide derivatives of G to A nucleotides, and in maintaining the intracellular balance of A and G nucleotides. This Salmonella paratyphi A (strain ATCC 9150 / SARB42) protein is GMP reductase.